Here is a 328-residue protein sequence, read N- to C-terminus: D-cysteine desulfhydrase (328 aa).

The residue at position 51 (Lys51) is an N6-(pyridoxal phosphate)lysine.

It belongs to the ACC deaminase/D-cysteine desulfhydrase family. In terms of assembly, homodimer. It depends on pyridoxal 5'-phosphate as a cofactor.

The catalysed reaction is D-cysteine + H2O = hydrogen sulfide + pyruvate + NH4(+) + H(+). Catalyzes the alpha,beta-elimination reaction of D-cysteine and of several D-cysteine derivatives. It could be a defense mechanism against D-cysteine. This chain is D-cysteine desulfhydrase, found in Shigella boydii serotype 18 (strain CDC 3083-94 / BS512).